The chain runs to 929 residues: Band 4.1-like protein 3 (929 aa).

N-acetylmethionine is present on methionine 1. The tract at residues 1–72 (MTTESGSDSE…STPVKREIGD (72 aa)) is disordered. Threonine 2 carries the N-acetylthreonine; in Band 4.1-like protein 3, N-terminally processed modification. Over residues 20-33 (QEAAGPQGQAGAQP) the composition is skewed to low complexity. The residue at position 96 (serine 96) is a Phosphoserine. An FERM domain is found at 118 to 399 (MQCKVTLLDG…EHHTFFRLLL (282 aa)). Positions 402–528 (APPKKFLTLG…PVTALRHEGK (127 aa)) are hydrophilic. Phosphoserine is present on residues serine 428, serine 451, and serine 486. The disordered stretch occupies residues 490–554 (LITTVTPEKK…TESDQEEDAE (65 aa)). Threonine 495 is subject to Phosphothreonine. Basic and acidic residues predominate over residues 496 to 516 (PEKKAEEERVEEEDRRKKAEE). Position 518 is a phosphothreonine (threonine 518). The segment covering 523–536 (LRHEGKTDSERTDT) has biased composition (basic and acidic residues). 2 positions are modified to phosphoserine: histidine 525 and serine 543. Threonine 545 is modified (phosphothreonine). Serine 547 is modified (phosphoserine). Positions 559 to 602 (DLDKTQDELMKHQTNISELKRTFLETSTETALTNEWEKRLSTSP) are spectrin--actin-binding. 3 disordered regions span residues 608–630 (RQED…SGEK), 665–689 (LETK…STEK), and 705–807 (VHAS…SPGG). Phosphothreonine is present on threonine 725. Residues 726-737 (PTDRRHTGKGKE) are compositionally biased toward basic and acidic residues. The segment at 777-929 (RTSEGLEQKS…TEITPEDGED (153 aa)) is C-terminal (CTD). The segment covering 789-802 (ESSTVRVESTSVGS) has biased composition (low complexity). Phosphoserine is present on residues serine 802 and serine 804. Threonine 923 is modified (phosphothreonine).

Interacts (via FERM domain) with CADM1. Interacts (via FERM domain) with PRMT3; the interaction is direct and inhibits the protein-arginine N-methyltransferase activity of PRMT3. Interacts with PRMT5. Interacts with PRMT6. As to quaternary structure, has the complete spectrin--actin-binding (SAB) domain and fully interacts with spectrin and actin. Detected in brain (at protein level). Highest expression in brain, lower in testis, adrenal gland, heart and kidney. Also present in muscle and epithelial cells. Isoform 1 is expressed in brain, isoform 2 is expressed in heart and isoform 3 is mostly expressed in kidney but also in heart and brain. Isoform 6 seems to be most abundant in kidney while isoform 4 and isoform 5 are predominantly expressed in heart and brain.

The protein localises to the cytoplasm. The protein resides in the cytoskeleton. It localises to the cell membrane. Its subcellular location is the cell junction. Tumor suppressor that inhibits cell proliferation and promotes apoptosis. Modulates the activity of protein arginine N-methyltransferases, including PRMT3 and PRMT5. This chain is Band 4.1-like protein 3, found in Mus musculus (Mouse).